The primary structure comprises 257 residues: Imidazole glycerol phosphate synthase subunit HisF (257 aa).

Active-site residues include Asp-11 and Asp-130.

It belongs to the HisA/HisF family. Heterodimer of HisH and HisF.

It localises to the cytoplasm. It catalyses the reaction 5-[(5-phospho-1-deoxy-D-ribulos-1-ylimino)methylamino]-1-(5-phospho-beta-D-ribosyl)imidazole-4-carboxamide + L-glutamine = D-erythro-1-(imidazol-4-yl)glycerol 3-phosphate + 5-amino-1-(5-phospho-beta-D-ribosyl)imidazole-4-carboxamide + L-glutamate + H(+). Its pathway is amino-acid biosynthesis; L-histidine biosynthesis; L-histidine from 5-phospho-alpha-D-ribose 1-diphosphate: step 5/9. IGPS catalyzes the conversion of PRFAR and glutamine to IGP, AICAR and glutamate. The HisF subunit catalyzes the cyclization activity that produces IGP and AICAR from PRFAR using the ammonia provided by the HisH subunit. This chain is Imidazole glycerol phosphate synthase subunit HisF, found in Afipia carboxidovorans (strain ATCC 49405 / DSM 1227 / KCTC 32145 / OM5) (Oligotropha carboxidovorans).